We begin with the raw amino-acid sequence, 2637 residues long: Nonribisomal peptide synthetase valB (2637 aa).

The interval Met1–Thr376 is condensation 1. The interval Ser413–Leu803 is adenylation 1. Positions Pro946–Thr1022 constitute a Carrier 1 domain. Residue Ser983 is modified to O-(pantetheine 4'-phosphoryl)serine. The disordered stretch occupies residues Ser1016–Arg1045. The segment at Val1063–Gln1506 is condensation 2. Positions Ala1524 to Leu1933 are adenylation 2. The Carrier 2 domain maps to Lys2078–Asn2154. Ser2115 is subject to O-(pantetheine 4'-phosphoryl)serine. Residues Glu2193–Ala2582 are condensation 3.

The protein belongs to the NRP synthetase family.

The protein operates within secondary metabolite biosynthesis. In terms of biological role, nonribisomal peptide synthetase; part of the gene cluster that mediates the biosynthesis of valactamides. The first step of the pathway is performed by the highly reducing polyketide synthase valA that produces the polyketide part of the final products. An acetyl starter unit is incorporated by the ketosynthase domain of valA, and subsequently 6 malonyl-CoA-derived ketide units are incorporated and fully reduced to their respective alkane forms by the action of the ketoreductase, dehydratase, and enoylreductase domains (except for the penultimate unit, which is reduced only to the alkene). The final five ketide units are each proposed to be alpha-methylated by the methyltransferase domain before ketone reduction by the ketoreductase domain. The C1 domain of the nonribisomal peptide synthetase valB then catalyzes amide bond formation between the heptaketide chain and L-valine (L-Val) attached to the T1 domain. The C2 domain incorporating L-isoleucine (L-Ile) then carries out chain elongation, which is followed by macrolactonization by the Ct domain to release the final product. The sequence is that of Nonribisomal peptide synthetase valB from Aspergillus terreus.